Here is a 310-residue protein sequence, read N- to C-terminus: Putative S-adenosyl-L-methionine-dependent methyltransferase Mvan_1346 (310 aa).

S-adenosyl-L-methionine is bound by residues Asp136 and 165–166 (DL).

Belongs to the UPF0677 family.

Its function is as follows. Exhibits S-adenosyl-L-methionine-dependent methyltransferase activity. The protein is Putative S-adenosyl-L-methionine-dependent methyltransferase Mvan_1346 of Mycolicibacterium vanbaalenii (strain DSM 7251 / JCM 13017 / BCRC 16820 / KCTC 9966 / NRRL B-24157 / PYR-1) (Mycobacterium vanbaalenii).